We begin with the raw amino-acid sequence, 726 residues long: AP-1 complex subunit beta-1 (726 aa).

The protein belongs to the adaptor complexes large subunit family. As to quaternary structure, adaptor protein complex 1 (AP-1) is a heterotetramer composed of two large adaptins (gamma-type subunit APL4 and beta-type subunit APL2), a medium adaptin (mu-type subunit APM1) and a small adaptin (sigma-type subunit APS1). Interacts with CHC1. Interacts with APM2, probably forming an alternative AP-1-like complex.

Its subcellular location is the cell membrane. The protein resides in the membrane. It is found in the coated pit. Its function is as follows. Adaptins are components of the adaptor complexes which link clathrin to receptors in coated vesicles. Clathrin-associated protein complexes are believed to interact with the cytoplasmic tails of membrane proteins, leading to their selection and concentration. The AP-1 complex interacts directly with clathrin. This chain is AP-1 complex subunit beta-1 (APL2), found in Saccharomyces cerevisiae (strain ATCC 204508 / S288c) (Baker's yeast).